The following is a 453-amino-acid chain: Enolase (453 aa).

Glutamine 163 is a (2R)-2-phosphoglycerate binding site. Catalysis depends on glutamate 205, which acts as the Proton donor. 3 residues coordinate Mg(2+): aspartate 258, glutamate 308, and aspartate 335. (2R)-2-phosphoglycerate is bound by residues lysine 360, arginine 389, serine 390, and lysine 411. Lysine 360 serves as the catalytic Proton acceptor.

It belongs to the enolase family. Requires Mg(2+) as cofactor.

It localises to the cytoplasm. The protein resides in the secreted. It is found in the cell surface. The enzyme catalyses (2R)-2-phosphoglycerate = phosphoenolpyruvate + H2O. Its pathway is carbohydrate degradation; glycolysis; pyruvate from D-glyceraldehyde 3-phosphate: step 4/5. In terms of biological role, catalyzes the reversible conversion of 2-phosphoglycerate (2-PG) into phosphoenolpyruvate (PEP). It is essential for the degradation of carbohydrates via glycolysis. This Mesoplasma florum (strain ATCC 33453 / NBRC 100688 / NCTC 11704 / L1) (Acholeplasma florum) protein is Enolase.